Reading from the N-terminus, the 451-residue chain is Phosphoglucosamine mutase (451 aa).

Residue Ser107 is the Phosphoserine intermediate of the active site. Ser107, Asp246, Asp248, and Asp250 together coordinate Mg(2+). Residue Ser107 is modified to Phosphoserine.

This sequence belongs to the phosphohexose mutase family. Requires Mg(2+) as cofactor. Post-translationally, activated by phosphorylation.

It carries out the reaction alpha-D-glucosamine 1-phosphate = D-glucosamine 6-phosphate. Its function is as follows. Catalyzes the conversion of glucosamine-6-phosphate to glucosamine-1-phosphate. The protein is Phosphoglucosamine mutase of Burkholderia cenocepacia (strain ATCC BAA-245 / DSM 16553 / LMG 16656 / NCTC 13227 / J2315 / CF5610) (Burkholderia cepacia (strain J2315)).